We begin with the raw amino-acid sequence, 213 residues long: Glycerol-3-phosphate acyltransferase (213 aa).

Helical transmembrane passes span 2–22 (ITIVLLILAYLLGSIPSGLWI), 52–74 (AGMATFVIDFFKGTLATLLPIIF), 81–100 (PLIFGLLAVIGHTFPIFAGF), 112–132 (VIFGFAPIFCLYLAIIFFGAL), 143–163 (VTASIAAVIGVLLFPLFGFIL), and 164–184 (SNYDSLFIAIILALASLIIIR).

Belongs to the PlsY family. In terms of assembly, probably interacts with PlsX.

The protein localises to the cell membrane. The catalysed reaction is an acyl phosphate + sn-glycerol 3-phosphate = a 1-acyl-sn-glycero-3-phosphate + phosphate. It participates in lipid metabolism; phospholipid metabolism. Catalyzes the transfer of an acyl group from acyl-phosphate (acyl-PO(4)) to glycerol-3-phosphate (G3P) to form lysophosphatidic acid (LPA). This enzyme utilizes acyl-phosphate as fatty acyl donor, but not acyl-CoA or acyl-ACP. The polypeptide is Glycerol-3-phosphate acyltransferase (Streptococcus pneumoniae (strain ATCC 700669 / Spain 23F-1)).